The following is an 84-amino-acid chain: Large ribosomal subunit protein bL27 (84 aa).

The disordered stretch occupies residues 1 to 22 (MAHKKAGGSTRNGRDSESKRLG).

This sequence belongs to the bacterial ribosomal protein bL27 family.

This Shewanella baltica (strain OS223) protein is Large ribosomal subunit protein bL27.